A 196-amino-acid polypeptide reads, in one-letter code: Protein GrpE (196 aa).

The tract at residues 1–39 (MSSKEQKTPEGQAPEEIIMDQHEEIEAVEPEASAEQVDP) is disordered.

It belongs to the GrpE family. In terms of assembly, homodimer.

Its subcellular location is the cytoplasm. Its function is as follows. Participates actively in the response to hyperosmotic and heat shock by preventing the aggregation of stress-denatured proteins, in association with DnaK and GrpE. It is the nucleotide exchange factor for DnaK and may function as a thermosensor. Unfolded proteins bind initially to DnaJ; upon interaction with the DnaJ-bound protein, DnaK hydrolyzes its bound ATP, resulting in the formation of a stable complex. GrpE releases ADP from DnaK; ATP binding to DnaK triggers the release of the substrate protein, thus completing the reaction cycle. Several rounds of ATP-dependent interactions between DnaJ, DnaK and GrpE are required for fully efficient folding. In Escherichia coli (strain SMS-3-5 / SECEC), this protein is Protein GrpE.